A 234-amino-acid chain; its full sequence is tRNA1(Val) (adenine(37)-N6)-methyltransferase (234 aa).

This sequence belongs to the methyltransferase superfamily. tRNA (adenine-N(6)-)-methyltransferase family.

It is found in the cytoplasm. It catalyses the reaction adenosine(37) in tRNA1(Val) + S-adenosyl-L-methionine = N(6)-methyladenosine(37) in tRNA1(Val) + S-adenosyl-L-homocysteine + H(+). Specifically methylates the adenine in position 37 of tRNA(1)(Val) (anticodon cmo5UAC). In Pedobacter heparinus (strain ATCC 13125 / DSM 2366 / CIP 104194 / JCM 7457 / NBRC 12017 / NCIMB 9290 / NRRL B-14731 / HIM 762-3), this protein is tRNA1(Val) (adenine(37)-N6)-methyltransferase.